A 428-amino-acid chain; its full sequence is NADP-specific glutamate dehydrogenase (428 aa).

Positions 68 and 92 each coordinate substrate. Lysine 104 functions as the Proton donor in the catalytic mechanism. Positions 188 and 219 each coordinate NADP(+). Serine 356 serves as a coordination point for substrate.

The protein belongs to the Glu/Leu/Phe/Val dehydrogenases family. In terms of assembly, homohexamer.

It carries out the reaction L-glutamate + NADP(+) + H2O = 2-oxoglutarate + NH4(+) + NADPH + H(+). Catalyzes the reversible oxidative deamination of glutamate to alpha-ketoglutarate and ammonia. This Synechocystis sp. (strain ATCC 27184 / PCC 6803 / Kazusa) protein is NADP-specific glutamate dehydrogenase (gdhA).